We begin with the raw amino-acid sequence, 215 residues long: Nascent polypeptide-associated complex subunit alpha (215 aa).

Residues 1–81 (MPGEATETVP…SEKKARKAMS (81 aa)) form a disordered region. The span at 9-28 (VPATEQELPQPQAETGSGTE) shows a compositional bias: polar residues. Positions 29-40 (SDSDESVPELEG) are enriched in acidic residues. Residue Ser43 is modified to Phosphoserine; by ILK1. Over residues 44–57 (TQATTQQAQLAAAA) the composition is skewed to low complexity. Positions 69-80 (QSRSEKKARKAM) are required for DNA-binding. An NAC-A/B domain is found at 70–135 (SRSEKKARKA…AKIEDLSQQA (66 aa)). Residues 93–108 (RVTIRKSKNILFVITK) are RNA/DNA-binding. The residue at position 132 (Ser132) is a Phosphoserine. The residue at position 142 (Lys142) is an N6-acetyllysine; alternate. Lys142 participates in a covalent cross-link: Glycyl lysine isopeptide (Lys-Gly) (interchain with G-Cter in SUMO2); alternate. The residue at position 159 (Thr159) is a Phosphothreonine; by GSK3-beta. Thr161 carries the post-translational modification Phosphothreonine. Phosphoserine is present on residues Ser166, Ser186, Ser191, and Ser203. Residues 176-213 (VEVKDIEWVMSQANVSRAKAVRALKNNSNNIVNAIMEL) enclose the UBA domain.

This sequence belongs to the NAC-alpha family. In terms of assembly, part of the nascent polypeptide-associated complex (NAC), which is a heterodimer of NACA and BTF3 (via NAC-A/B domains). NAC associates with ribosomes through the BTF3/NACB subunit and contacts the ribosomal protein L23, which is positioned near the exiting site. Both subunits can contact nascent polypeptide chains. NACA may also form homodimers, and only this form binds DNA. Interacts with TBP and JUN. Phosphorylation of Ser-43 by ILK during cell adhesion may promote nuclear localization. Phosphorylation of Thr-159 by GSK3B may promote proteasome mediated degradation.

It is found in the cytoplasm. It localises to the nucleus. In terms of biological role, prevents inappropriate targeting of non-secretory polypeptides to the endoplasmic reticulum (ER). Binds to nascent polypeptide chains as they emerge from the ribosome and blocks their interaction with the signal recognition particle (SRP), which normally targets nascent secretory peptides to the ER. Also reduces the inherent affinity of ribosomes for protein translocation sites in the ER membrane (M sites). May act as a specific coactivator for JUN, binding to DNA and stabilizing the interaction of JUN homodimers with target gene promoters. This chain is Nascent polypeptide-associated complex subunit alpha, found in Chinchilla lanigera (Long-tailed chinchilla).